Here is a 199-residue protein sequence, read N- to C-terminus: NADH-quinone oxidoreductase subunit C (199 aa).

This sequence belongs to the complex I 30 kDa subunit family. In terms of assembly, NDH-1 is composed of 14 different subunits. Subunits NuoB, C, D, E, F, and G constitute the peripheral sector of the complex.

It is found in the cell inner membrane. The enzyme catalyses a quinone + NADH + 5 H(+)(in) = a quinol + NAD(+) + 4 H(+)(out). Functionally, NDH-1 shuttles electrons from NADH, via FMN and iron-sulfur (Fe-S) centers, to quinones in the respiratory chain. The immediate electron acceptor for the enzyme in this species is believed to be ubiquinone. Couples the redox reaction to proton translocation (for every two electrons transferred, four hydrogen ions are translocated across the cytoplasmic membrane), and thus conserves the redox energy in a proton gradient. This Polynucleobacter necessarius subsp. necessarius (strain STIR1) protein is NADH-quinone oxidoreductase subunit C.